We begin with the raw amino-acid sequence, 70 residues long: uncharacterized protein (70 aa).

This is an uncharacterized protein from Treponema pallidum (strain Nichols).